The following is a 207-amino-acid chain: NADH-quinone oxidoreductase subunit A (207 aa).

Helical transmembrane passes span 6-26 (LSAI…LVVP), 62-82 (LVAI…AYAV), and 87-107 (AGWL…IGLV).

The protein belongs to the complex I subunit 3 family. In terms of assembly, NDH-1 is composed of 14 different subunits. Subunits NuoA, H, J, K, L, M, N constitute the membrane sector of the complex.

The protein localises to the cell inner membrane. The catalysed reaction is a quinone + NADH + 5 H(+)(in) = a quinol + NAD(+) + 4 H(+)(out). In terms of biological role, NDH-1 shuttles electrons from NADH, via FMN and iron-sulfur (Fe-S) centers, to quinones in the respiratory chain. The immediate electron acceptor for the enzyme in this species is believed to be ubiquinone. Couples the redox reaction to proton translocation (for every two electrons transferred, four hydrogen ions are translocated across the cytoplasmic membrane), and thus conserves the redox energy in a proton gradient. The protein is NADH-quinone oxidoreductase subunit A of Psychrobacter cryohalolentis (strain ATCC BAA-1226 / DSM 17306 / VKM B-2378 / K5).